A 338-amino-acid polypeptide reads, in one-letter code: Probable tRNA pseudouridine synthase B (338 aa).

Residue aspartate 78 is the Nucleophile of the active site. Residues 245–320 (LPKIILRDSA…IAASPIRVLM (76 aa)) enclose the PUA domain.

The protein belongs to the pseudouridine synthase TruB family. Type 2 subfamily.

The catalysed reaction is uridine(55) in tRNA = pseudouridine(55) in tRNA. Its function is as follows. Could be responsible for synthesis of pseudouridine from uracil-55 in the psi GC loop of transfer RNAs. The protein is Probable tRNA pseudouridine synthase B of Methanosarcina mazei (strain ATCC BAA-159 / DSM 3647 / Goe1 / Go1 / JCM 11833 / OCM 88) (Methanosarcina frisia).